Consider the following 31-residue polypeptide: Cytochrome b6-f complex subunit 6 (31 aa).

The chain crosses the membrane as a helical span at residues 4–24 (LLSYFGFLFAILTLTSVLFIG).

Belongs to the PetL family. As to quaternary structure, the 4 large subunits of the cytochrome b6-f complex are cytochrome b6, subunit IV (17 kDa polypeptide, PetD), cytochrome f and the Rieske protein, while the 4 small subunits are PetG, PetL, PetM and PetN. The complex functions as a dimer.

The protein localises to the plastid. It localises to the chloroplast thylakoid membrane. Functionally, component of the cytochrome b6-f complex, which mediates electron transfer between photosystem II (PSII) and photosystem I (PSI), cyclic electron flow around PSI, and state transitions. PetL is important for photoautotrophic growth as well as for electron transfer efficiency and stability of the cytochrome b6-f complex. This chain is Cytochrome b6-f complex subunit 6, found in Angiopteris evecta (Mule's foot fern).